Here is a 206-residue protein sequence, read N- to C-terminus: dITP/XTP pyrophosphatase (206 aa).

7-12 (SRNPKK) is a binding site for substrate. Asp-72 (proton acceptor) is an active-site residue. Asp-72 contributes to the Mg(2+) binding site. Substrate is bound by residues Ser-73, 155 to 158 (FGYD), Lys-178, and 183 to 184 (HR).

This sequence belongs to the HAM1 NTPase family. As to quaternary structure, homodimer. Mg(2+) is required as a cofactor.

It carries out the reaction XTP + H2O = XMP + diphosphate + H(+). The enzyme catalyses dITP + H2O = dIMP + diphosphate + H(+). The catalysed reaction is ITP + H2O = IMP + diphosphate + H(+). Pyrophosphatase that catalyzes the hydrolysis of nucleoside triphosphates to their monophosphate derivatives, with a high preference for the non-canonical purine nucleotides XTP (xanthosine triphosphate), dITP (deoxyinosine triphosphate) and ITP. Seems to function as a house-cleaning enzyme that removes non-canonical purine nucleotides from the nucleotide pool, thus preventing their incorporation into DNA/RNA and avoiding chromosomal lesions. This chain is dITP/XTP pyrophosphatase, found in Mycobacteroides abscessus (strain ATCC 19977 / DSM 44196 / CCUG 20993 / CIP 104536 / JCM 13569 / NCTC 13031 / TMC 1543 / L948) (Mycobacterium abscessus).